The primary structure comprises 164 residues: Diphosphoinositol polyphosphate phosphohydrolase 3-beta (164 aa).

Substrate contacts are provided by residues arginine 9, 17–19 (KKR), and 38–40 (SSR). Residues 17–144 (KKRAACLCFR…VHAEYLEKLK (128 aa)) enclose the Nudix hydrolase domain. Glycine 49 and glutamate 65 together coordinate Mg(2+). The Nudix box signature appears at 50-71 (GGMEPEEEPGGAAVREVYEEAG). Catalysis depends on glutamate 68, which acts as the Proton acceptor. Residue glutamate 69 coordinates Mg(2+). Residues 89 to 91 (RKH), arginine 115, and lysine 133 each bind substrate. Residues 144–164 (KLGGSPTNGNSMAPSSPDSDP) form a disordered region. A compositionally biased stretch (polar residues) spans 148 to 164 (SPTNGNSMAPSSPDSDP).

It belongs to the Nudix hydrolase family. DIPP subfamily. Mg(2+) is required as a cofactor. It depends on Mn(2+) as a cofactor. As to expression, mainly expressed in testis and, at lower level in brain. According to PubMed:12121577, it is also expressed in pancreas and weakly expressed in thymus, prostate, ovary, lung, small intestine and heart.

The protein resides in the cytoplasm. It catalyses the reaction diphospho-myo-inositol polyphosphate + H2O = myo-inositol polyphosphate + phosphate.. The enzyme catalyses P(1),P(6)-bis(5'-adenosyl) hexaphosphate + H2O = adenosine 5'-pentaphosphate + AMP + 2 H(+). The catalysed reaction is P(1),P(5)-bis(5'-adenosyl) pentaphosphate + H2O = adenosine 5'-tetraphosphate + AMP + 2 H(+). Its function is as follows. Cleaves a beta-phosphate from the diphosphate groups in PP-InsP5 (diphosphoinositol pentakisphosphate), suggesting that it may play a role in signal transduction. Also able to catalyze the hydrolysis of dinucleoside oligophosphates, with Ap6A and Ap5A being the preferred substrates. The major reaction products are ADP and p4a from Ap6A and ADP and ATP from Ap5A. Also able to hydrolyze 5-phosphoribose 1-diphosphate. The protein is Diphosphoinositol polyphosphate phosphohydrolase 3-beta of Homo sapiens (Human).